The following is a 1357-amino-acid chain: Vascular endothelial growth factor receptor 2 (1357 aa).

Residues 1 to 22 form the signal peptide; sequence MAKTSYALLLLDILLTFNVAKA. The Extracellular portion of the chain corresponds to 23-774; it reads IELRFVPDPP…GAEEKMNVEL (752 aa). 7 Ig-like C2-type domains span residues 32 to 120, 120 to 222, 216 to 330, 335 to 426, 433 to 553, 556 to 667, and 676 to 762; these read PTLN…SVAV, VYVF…VAVV, PYIV…ASLI, PFIA…RTFQ, PRIF…VIVF, TRFL…LLHN, and SRIV…ARIS. N-linked (GlcNAc...) asparagine glycans are attached at residues asparagine 35, asparagine 44, asparagine 66, asparagine 97, asparagine 161, asparagine 209, asparagine 247, asparagine 272, asparagine 303, asparagine 307, asparagine 407, asparagine 501, asparagine 560, asparagine 621, asparagine 631, asparagine 640, asparagine 681, asparagine 688, and asparagine 713. Disulfide bonds link cysteine 53/cysteine 104 and cysteine 153/cysteine 203. Cysteine 248 and cysteine 314 form a disulfide bridge. The cysteines at positions 457 and 538 are disulfide-linked. Cysteine 579 and cysteine 651 are oxidised to a cystine. A disulfide bridge connects residues cysteine 697 and cysteine 746. The helical transmembrane segment at 775–795 threads the bilayer; the sequence is IMPIGAVVIAMFLWLLIVFVI. Over 796-1357 the chain is Cytoplasmic; it reads RNRKRPNDGD…AEVRYSAPPV (562 aa). One can recognise a Protein kinase domain in the interval 843-1173; the sequence is LKLGEPLGRG…FTQLVEHLGN (331 aa). Residues 849 to 857 and lysine 877 each bind ATP; that span reads LGRGAFGQV. Residues 944–975 form a disordered region; that stretch reads YSPYKKRTPRMPNRREVQQDEDPREGDLGLGT. Catalysis depends on aspartate 1039, which acts as the Proton acceptor. Phosphotyrosine; by autocatalysis occurs at positions 1065, 1070, 1186, and 1222. The segment at 1296–1357 is disordered; sequence SLASESSNQT…AEVRYSAPPV (62 aa). A compositionally biased stretch (polar residues) spans 1298-1312; the sequence is ASESSNQTSGYQSGY.

Belongs to the protein kinase superfamily. Tyr protein kinase family. CSF-1/PDGF receptor subfamily. Interacts with isoform VEGF165 of vegfaa and, to a lesser extent, with isoform VEGF171 of vegfab. Interacts (via juxtamembrane region) with chaperone pdcl3 (via thioredoxin fold region); the interaction leads to increased vegfr2 abundance through inhibition of its ubiquitination and degradation. As to expression, first expressed in embryos between 5- and 7-somites in the bilateral stripes that contain the developing angioblasts, and then localized to the intermediate cell mass (ICM) and the developing vasculature. By 30 hpf, expressed in the major trunk, head and intersomitic vessels, persisting through 4 dpf when expression is seen in developing subintestinal veins and in the remaining vasculature.

It is found in the cell membrane. It localises to the cytoplasm. Its subcellular location is the nucleus. The protein localises to the cytoplasmic vesicle. The protein resides in the early endosome. It is found in the cell junction. It localises to the endoplasmic reticulum. The catalysed reaction is L-tyrosyl-[protein] + ATP = O-phospho-L-tyrosyl-[protein] + ADP + H(+). In terms of biological role, receptor for VEGF or VEGFC. Has a tyrosine-protein kinase activity. Combinations of multiple VEGF receptors are required for development of different blood vessel types in the embryo. Involved in angiogenesis, specifically in VEGF-induced sprouting of new blood vessels. Particularly involved in artery formation. Does not appear to be required for hematopoiesis. The polypeptide is Vascular endothelial growth factor receptor 2 (Danio rerio (Zebrafish)).